The chain runs to 599 residues: MLRTHDLGSLRSEHIGQTVTLAGWVGRRRDHGGVAFVDLRDASGVAQIVVREEEVFHGLRNEYVLQVTGTVSKRPEGNENPALGTGEIEVIAEDVTVLNTSDPLPFQIDEHVEVGEEARLKHRYLDLRRPGPSRNIRLRSEANRVARDLLHHEGYVEIETPTLTRSTPEGARDFLVPARLAPGSWYALPQSPQLFKQLLQVGGFEKYYQIARCYRDEDFRADRQPEFTQLDIEASFVDQDDVIRLGENIVKAVWKLIDVEIPTPIQRITYADAMARYGSDKPDLRFGQELTELTEFFKDTNFGVFKAPYVGAVVMPGGASQARRALDAWQEWAKQRGAKGLAYVLYKEDGELAGPVAKNLTDTERAGLADAVGAKPGDCIFFAAGEKTPSRALLGAARVEIGHRTGLIDPTDWAFCWVVDAPMFEPAAAAVASGDVAVGAGQWTAVHHAFTSPKPEFLDTFDKDPESALSYAYDIVCNGNEIGGGSIRIHQRDVQERVFELMGLDKEDAQTKFGFLLEGFKYGAPPHGGIAFGWDRVVSLLAGVESIRDVIAFPKSGGGFDPLTAAPAPITAQQRKEAGVDFKPEAVKPVEARKAEAVK.

An L-aspartate-binding site is contributed by E169. Residues 193-196 form an aspartate region; it reads QLFK. An L-aspartate-binding site is contributed by R215. Residues 215–217 and Q224 each bind ATP; that span reads RDE. H447 contacts L-aspartate. Residue E481 participates in ATP binding. R488 contributes to the L-aspartate binding site. An ATP-binding site is contributed by 533–536; sequence GWDR.

Belongs to the class-II aminoacyl-tRNA synthetase family. Type 1 subfamily. Homodimer.

The protein resides in the cytoplasm. The catalysed reaction is tRNA(Asx) + L-aspartate + ATP = L-aspartyl-tRNA(Asx) + AMP + diphosphate. Its function is as follows. Aspartyl-tRNA synthetase with relaxed tRNA specificity since it is able to aspartylate not only its cognate tRNA(Asp) but also tRNA(Asn). Reaction proceeds in two steps: L-aspartate is first activated by ATP to form Asp-AMP and then transferred to the acceptor end of tRNA(Asp/Asn). The sequence is that of Aspartate--tRNA(Asp/Asn) ligase from Pseudarthrobacter chlorophenolicus (strain ATCC 700700 / DSM 12829 / CIP 107037 / JCM 12360 / KCTC 9906 / NCIMB 13794 / A6) (Arthrobacter chlorophenolicus).